Consider the following 486-residue polypeptide: Corytuberine synthase (486 aa).

Residues 6-21 (ALFSLIPVILVFILLL) form a helical membrane-spanning segment. Residue cysteine 428 participates in heme binding.

The protein belongs to the cytochrome P450 family. Requires heme as cofactor.

Its subcellular location is the endoplasmic reticulum membrane. The enzyme catalyses (S)-reticuline + reduced [NADPH--hemoprotein reductase] + O2 = (S)-corytuberine + oxidized [NADPH--hemoprotein reductase] + 2 H2O + 2 H(+). Inhibited by ketoconazole. In terms of biological role, cytochrome P450 that catalyzes an intramolecular C-C phenol coupling of (S)-reticuline in magnoflorine biosynthesis. Catalyzes the formation of (S)-corytuberine from (S)-reticuline, and also, with a lover efficiency, the 4'-O-demethylation of codamine to produce orientaline, and subsequent C-C-phenol coupling of orientaline. Can also use (R,S)-norreticuline, (R,S)-orientaline, (S)-N-methylcoclaurine and (S)-coclaurine as substrates, but not (R,S)-6-O-methyllaudanosoline, (R,S)-6-O-methylnorlaudanosoline, (R,S)-laudanine, (R,S)-norlaudanine, (R,S)-4'-O-methyllaudanosoline, (R,S)-pseudocodamine, (R,S)-norpseudocodamine, (R,S)-laudanosine, (R,S)-norlaudanosine, (R,S)-laudanosoline or (R,S)-norlaudanosoline. The protein is Corytuberine synthase of Coptis japonica (Japanese goldthread).